A 481-amino-acid polypeptide reads, in one-letter code: Abl interactor 1 (481 aa).

A2 bears the N-acetylalanine mark. The segment at 18-79 (ALIESYQNLT…NNVLQLLDIQ (62 aa)) is required for binding to WASF1. The region spanning 45–107 (KALEETKAYT…DIHKEKVARR (63 aa)) is the t-SNARE coiled-coil homology domain. Position 53 is a phosphotyrosine (Y53). Residues 158 to 285 (AKHGNNQPAR…PGAAPGSQYG (128 aa)) are disordered. Residues 161 to 175 (GNNQPARTGTLSRTN) are compositionally biased toward polar residues. Residues T174 and T178 each carry the phosphothreonine modification. 2 positions are modified to phosphoserine: S183 and S187. A Phosphotyrosine modification is found at Y213. Residue T215 is modified to Phosphothreonine. A phosphoserine mark is found at S216, S222, and S225. Over residues 222-235 (SQHSPGRTASLNQR) the composition is skewed to polar residues. Composition is skewed to low complexity over residues 248–258 (SRENSGSSSIG) and 272–282 (GPAAPGAAPGS). Phosphoserine is present on residues S292 and S296. Disordered stretches follow at residues 318–348 (AQPHVNGGPLYSQNSISVAPPPPPMPQLTPQ) and 361–392 (NIADSPTPPPPPPPDDIPMFDDSPPPPPPPPV). Pro residues-rich tracts occupy residues 366 to 376 (PTPPPPPPPDD) and 383 to 392 (SPPPPPPPPV). One can recognise an SH3 domain in the interval 419–478 (NYIEKVVAIYDYTKDKDDELSFKEGAIIYVIKKNDDGWFEGVCNRVTGLFPGNYVESIMH). Y428 bears the Phosphotyrosine mark. A Phosphoserine modification is found at S439. Position 480 is a phosphothreonine (T480).

It belongs to the ABI family. In terms of assembly, interacts with ENAH, Abelson murine leukemia virus V-ABL, ABL1, STX1A, SNAP25, VAMP2, and through its N-terminus with WASF1. Part of a complex consisting of ABI1, STX1A and SNAP25. Part of a complex consisting of ABI1, EPS8 and SOS1. Interacts with EPS8, SOS1, SOS2, GRB2, SPTA1, and the first SH3 domain of NCK1. Component of the WAVE2 complex composed of ABI1, CYFIP1/SRA1, NCKAP1/NAP1 (NCKAP1l/HEM1 in hematopoietic cells) and WASF2/WAVE2. Interacts (via SH3 domain) with SHANK2 and SHANK3, but not SHANK1; the interaction is direct. Interacts with the heterodimer MYC:MAX; the interaction may enhance MYC:MAX transcriptional activity. Interacts with FNBP1L (via the SH3 domain), WASF2, and CDC42, but only in the presence of FNBP1L. In terms of processing, phosphorylated on tyrosine residues after serum stimulation or induction by v-Abl. Seems to be phosphorylated at Tyr-53 by ABL1, required for nuclear but not for synaptic localization. In terms of tissue distribution, widely expressed with highest levels in bone marrow, spleen, brain, testes, and embryonic brain. In adult brain prominently expressed in the neocortex, hippocampus and dentate gyrus.

It localises to the cytoplasm. The protein localises to the nucleus. Its subcellular location is the cell projection. It is found in the lamellipodium. The protein resides in the filopodium. It localises to the growth cone. The protein localises to the postsynaptic density. Its subcellular location is the cytoskeleton. Its function is as follows. May act in negative regulation of cell growth and transformation by interacting with nonreceptor tyrosine kinases ABL1 and/or ABL2. In vitro, at least isoform 2 and isoform 4 suppress the transforming activity of Abelson murine leukemia virus (v-Abl) after overexpression in fibroblasts. May play a role in regulation EGF-induced Erk pathway activation. Involved in cytoskeletal reorganization and EGFR signaling. Together with EPS8 participates in transduction of signals from Ras to Rac. In vitro, a trimeric complex of ABI1, EPS8 and SOS1 exhibits Rac specific guanine nucleotide exchange factor (GEF) activity and ABI1 seems to act as an adapter in the complex. Regulates ABL1/c-Abl-mediated phosphorylation of ENAH. Recruits WASF1 to lamellipodia and there seems to regulate WASF1 protein level. In brain, seems to regulate the dendritic outgrowth and branching as well as to determine the shape and number of synaptic contacts of developing neurons. The protein is Abl interactor 1 of Mus musculus (Mouse).